The primary structure comprises 376 residues: Alkanesulfonate monooxygenase (376 aa).

The protein belongs to the SsuD family.

It carries out the reaction an alkanesulfonate + FMNH2 + O2 = an aldehyde + FMN + sulfite + H2O + 2 H(+). Catalyzes the desulfonation of aliphatic sulfonates. The protein is Alkanesulfonate monooxygenase of Bacillus licheniformis (strain ATCC 14580 / DSM 13 / JCM 2505 / CCUG 7422 / NBRC 12200 / NCIMB 9375 / NCTC 10341 / NRRL NRS-1264 / Gibson 46).